A 208-amino-acid polypeptide reads, in one-letter code: Mediator of RNA polymerase II transcription subunit 18 (208 aa).

Position 66 is a phosphoserine (S66).

The protein belongs to the Mediator complex subunit 18 family. In terms of assembly, component of the Mediator complex, which is composed of MED1, MED4, MED6, MED7, MED8, MED9, MED10, MED11, MED12, MED13, MED13L, MED14, MED15, MED16, MED17, MED18, MED19, MED20, MED21, MED22, MED23, MED24, MED25, MED26, MED27, MED29, MED30, MED31, CCNC, CDK8 and CDC2L6/CDK11. The MED12, MED13, CCNC and CDK8 subunits form a distinct module termed the CDK8 module. Mediator containing the CDK8 module is less active than Mediator lacking this module in supporting transcriptional activation. Individual preparations of the Mediator complex lacking one or more distinct subunits have been variously termed ARC, CRSP, DRIP, PC2, SMCC and TRAP.

It localises to the nucleus. Its function is as follows. Component of the Mediator complex, a coactivator involved in the regulated transcription of nearly all RNA polymerase II-dependent genes. Mediator functions as a bridge to convey information from gene-specific regulatory proteins to the basal RNA polymerase II transcription machinery. Mediator is recruited to promoters by direct interactions with regulatory proteins and serves as a scaffold for the assembly of a functional preinitiation complex with RNA polymerase II and the general transcription factors. The sequence is that of Mediator of RNA polymerase II transcription subunit 18 (MED18) from Homo sapiens (Human).